Consider the following 110-residue polypeptide: UPF0060 membrane protein Bcep18194_A4425 (110 aa).

Transmembrane regions (helical) follow at residues 9–29 (ALFA…WLVL), 34–54 (PVWL…LLTL), 66–86 (YGGV…GVAL), and 88–108 (RWDV…ALQP).

This sequence belongs to the UPF0060 family.

It is found in the cell inner membrane. The sequence is that of UPF0060 membrane protein Bcep18194_A4425 from Burkholderia lata (strain ATCC 17760 / DSM 23089 / LMG 22485 / NCIMB 9086 / R18194 / 383).